The primary structure comprises 255 residues: Type III pantothenate kinase (255 aa).

7–14 (DVGNTRLK) provides a ligand contact to ATP. Substrate is bound by residues tyrosine 96 and 103-106 (GADR). Residue aspartate 105 is the Proton acceptor of the active site. ATP is bound at residue threonine 133. Threonine 183 contributes to the substrate binding site.

The protein belongs to the type III pantothenate kinase family. Homodimer. NH4(+) serves as cofactor. It depends on K(+) as a cofactor.

The protein resides in the cytoplasm. It carries out the reaction (R)-pantothenate + ATP = (R)-4'-phosphopantothenate + ADP + H(+). Its pathway is cofactor biosynthesis; coenzyme A biosynthesis; CoA from (R)-pantothenate: step 1/5. Functionally, catalyzes the phosphorylation of pantothenate (Pan), the first step in CoA biosynthesis. The protein is Type III pantothenate kinase of Albidiferax ferrireducens (strain ATCC BAA-621 / DSM 15236 / T118) (Rhodoferax ferrireducens).